Here is a 456-residue protein sequence, read N- to C-terminus: 3-isopropylmalate dehydratase large subunit (456 aa).

Residues Cys-336, Cys-396, and Cys-399 each coordinate [4Fe-4S] cluster.

This sequence belongs to the aconitase/IPM isomerase family. LeuC type 1 subfamily. As to quaternary structure, heterodimer of LeuC and LeuD. Requires [4Fe-4S] cluster as cofactor.

It carries out the reaction (2R,3S)-3-isopropylmalate = (2S)-2-isopropylmalate. It participates in amino-acid biosynthesis; L-leucine biosynthesis; L-leucine from 3-methyl-2-oxobutanoate: step 2/4. In terms of biological role, catalyzes the isomerization between 2-isopropylmalate and 3-isopropylmalate, via the formation of 2-isopropylmaleate. This is 3-isopropylmalate dehydratase large subunit from Staphylococcus aureus (strain JH1).